The primary structure comprises 437 residues: Cysteine--tRNA ligase (437 aa).

C31 serves as a coordination point for Zn(2+). The 'HIGH' region motif lies at 33 to 43 (PTVYNDLHLGN). Residues C205, H230, and E234 each coordinate Zn(2+). Positions 262-266 (KMSKS) match the 'KMSKS' region motif. Residue K265 coordinates ATP.

It belongs to the class-I aminoacyl-tRNA synthetase family. In terms of assembly, monomer. Requires Zn(2+) as cofactor.

It localises to the cytoplasm. It catalyses the reaction tRNA(Cys) + L-cysteine + ATP = L-cysteinyl-tRNA(Cys) + AMP + diphosphate. The protein is Cysteine--tRNA ligase (cysS) of Mycoplasma pneumoniae (strain ATCC 29342 / M129 / Subtype 1) (Mycoplasmoides pneumoniae).